The sequence spans 495 residues: Maturase K (495 aa).

This sequence belongs to the intron maturase 2 family. MatK subfamily.

Its subcellular location is the plastid. The protein localises to the chloroplast. Its function is as follows. Usually encoded in the trnK tRNA gene intron. Probably assists in splicing its own and other chloroplast group II introns. This is Maturase K from Torreya californica (California nutmeg).